The following is a 337-amino-acid chain: MLYSLIRPALFSLDAEDAHGLTLTGLDVAQRLGLVGLQPRATGKPVQVMGIDFPNAVGLAAGLDKDGAHLKGLAALGFGFLEIGTVTPRPQPGNPKPRLFRLPAAEGIINRMGFNNLGVDNLVRNVVASGYTGVLGINIGKNKDTPNERAADDYLACLDKVYAHARYVTVNISSPNTQNLRELQQDEALDALLSAIKLRQSELAQQHGRYVPIALKIAPDLDEAQIAAIAALLMRHGIDAVIATNTTIARDAVAGLPNANESGGLSGAPVREASTRVVRTLAQHLGGALPIIGVGGILSGDDARAKIAAGASLVQLYSGLIYRGPGLVRECVERLAQ.

FMN-binding positions include 61–65 (AGLDK) and T85. Residue K65 participates in substrate binding. Substrate is bound at residue 110 to 114 (NRMGF). Residues N138 and N171 each contribute to the FMN site. N171 serves as a coordination point for substrate. S174 acts as the Nucleophile in catalysis. N176 provides a ligand contact to substrate. The FMN site is built by K216 and T244. 245–246 (NT) provides a ligand contact to substrate. FMN-binding positions include G267, G296, and 317-318 (YS).

Belongs to the dihydroorotate dehydrogenase family. Type 2 subfamily. Monomer. The cofactor is FMN.

Its subcellular location is the cell membrane. The enzyme catalyses (S)-dihydroorotate + a quinone = orotate + a quinol. It participates in pyrimidine metabolism; UMP biosynthesis via de novo pathway; orotate from (S)-dihydroorotate (quinone route): step 1/1. In terms of biological role, catalyzes the conversion of dihydroorotate to orotate with quinone as electron acceptor. In Thiobacillus denitrificans (strain ATCC 25259 / T1), this protein is Dihydroorotate dehydrogenase (quinone).